Here is a 418-residue protein sequence, read N- to C-terminus: Putative heat shock protein HSP 90-alpha A4 (418 aa).

ATP contacts are provided by aspartate 33, lysine 52, phenylalanine 78, and arginine 204. Disordered stretches follow at residues 255–289 (EDLE…TSAK) and 383–418 (GLGT…RMEK). Residues 265 to 274 (EKKKQEEGKQ) show a composition bias toward basic and acidic residues.

This sequence belongs to the heat shock protein 90 family. As to quaternary structure, homodimer.

The protein resides in the cytoplasm. Its function is as follows. Putative molecular chaperone that may promote the maturation, structural maintenance and proper regulation of specific target proteins. This is Putative heat shock protein HSP 90-alpha A4 (HSP90AA4P) from Homo sapiens (Human).